The primary structure comprises 338 residues: NAC domain-containing protein 46 (338 aa).

An NAC domain is found at 20–171 (LPPGFRFHPT…EWVVCRVFHK (152 aa)). The DNA-binding element occupies 118-177 (VGMKKTLVFYTGRAPKGEKTNWVMHEYRLDGKYSYHNLPKTARDEWVVCRVFHKNAPSTT).

In terms of assembly, interacts with RCD1.

It localises to the nucleus. In terms of biological role, transcriptional activator that acts as a positive regulator of leaf senescence. Activates NYC1, SGR1, SGR2 and PAO, which are genes involved in chlorophyll catabolic processes. Activates senescence-associated genes, such as RNS1, SAG12 and SAG13. The polypeptide is NAC domain-containing protein 46 (Arabidopsis thaliana (Mouse-ear cress)).